The sequence spans 429 residues: uncharacterized protein (429 aa).

The next 11 membrane-spanning stretches (helical) occupy residues 27-47, 48-68, 78-98, 106-126, 142-162, 198-218, 219-239, 249-269, 288-308, 351-371, and 399-419; these read PFFFLFCLFIPFDNTSLQSIG, GIMTASPSALILLPGLFVSIL, ILLCFFGVLLISFLYYFYWVF, IFILDRGSRYFLLYVFYFLAL, ALIIIVVIFSVLLNYLDPAII, LLLAVLLNWSTFFLVTVTIVI, AILTTSKGAALSFLICICFYF, VLLSLCSIVISYIIFKYYFLD, FIVGLKIFLFNPLGVGFFGYL, LILDLLIIYGVFFLIPFIYFI, and FFISHLGSYFTPFCIAFLIIL.

It localises to the cell membrane. Functionally, may function as a transporter. This is an uncharacterized protein from Klebsiella pneumoniae.